The chain runs to 361 residues: Transposase A from transposon Tn554 (361 aa).

The Core-binding (CB) domain occupies 23-120; sequence YQLIEPVMKF…VVMSFLDYLS (98 aa). One can recognise a Tyr recombinase domain in the interval 163–351; that stretch reads KQIRTLRSKE…SDQDMKNEFN (189 aa). Catalysis depends on residues R198, K232, H302, R305, and H328. The O-(3'-phospho-DNA)-tyrosine intermediate role is filled by Y338.

It belongs to the 'phage' integrase family.

Its function is as follows. One of three proteins encoded by transposon Tn554 required for its transposition. In Staphylococcus aureus (strain Mu50 / ATCC 700699), this protein is Transposase A from transposon Tn554 (tnpA1).